Consider the following 214-residue polypeptide: Ras-related protein RABA5c (214 aa).

19 to 26 (GDSAVGKS) is a GTP binding site. The short motif at 41–49 (SKATIGVEF) is the Effector region element. GTP-binding positions include 67–71 (DTAGQ), 125–128 (NKCD), and 155–156 (SA). 2 S-geranylgeranyl cysteine lipidation sites follow: cysteine 211 and cysteine 212.

It belongs to the small GTPase superfamily. Rab family. As to quaternary structure, interacts (via C-terminus) with GDI1. Interacts with PUX8/SAY1. Expressed in roots and actively dividing cells.

Its subcellular location is the golgi apparatus membrane. It localises to the golgi apparatus. The protein localises to the trans-Golgi network membrane. The protein resides in the cell membrane. Its function is as follows. Intracellular vesicle trafficking and protein transport. Binds GTP and GDP and possesses intrinsic GTPase activity. The protein is Ras-related protein RABA5c (RABA5C) of Arabidopsis thaliana (Mouse-ear cress).